We begin with the raw amino-acid sequence, 411 residues long: uncharacterized protein (411 aa).

The UmuC domain maps to 20–199 (FLYFDFDAFF…LPITEIPGIG (180 aa)).

This sequence belongs to the DNA polymerase type-Y family.

This is an uncharacterized protein from Mycoplasma genitalium (strain ATCC 33530 / DSM 19775 / NCTC 10195 / G37) (Mycoplasmoides genitalium).